A 120-amino-acid chain; its full sequence is Large ribosomal subunit protein uL18 (120 aa).

The protein belongs to the universal ribosomal protein uL18 family. As to quaternary structure, part of the 50S ribosomal subunit; part of the 5S rRNA/L5/L18/L25 subcomplex. Contacts the 5S and 23S rRNAs.

In terms of biological role, this is one of the proteins that bind and probably mediate the attachment of the 5S RNA into the large ribosomal subunit, where it forms part of the central protuberance. In Clostridium botulinum (strain Eklund 17B / Type B), this protein is Large ribosomal subunit protein uL18.